The chain runs to 408 residues: Peptidase T (408 aa).

His78 is a binding site for Zn(2+). The active site involves Asp80. Asp140 serves as a coordination point for Zn(2+). Residue Glu173 is the Proton acceptor of the active site. Residues Glu174, Asp196, and His379 each coordinate Zn(2+).

Belongs to the peptidase M20B family. Zn(2+) is required as a cofactor.

Its subcellular location is the cytoplasm. It carries out the reaction Release of the N-terminal residue from a tripeptide.. Its function is as follows. Cleaves the N-terminal amino acid of tripeptides. The protein is Peptidase T of Escherichia coli O9:H4 (strain HS).